The chain runs to 330 residues: Aspartate--ammonia ligase (330 aa).

Belongs to the class-II aminoacyl-tRNA synthetase family. AsnA subfamily.

The protein localises to the cytoplasm. The enzyme catalyses L-aspartate + NH4(+) + ATP = L-asparagine + AMP + diphosphate + H(+). The protein operates within amino-acid biosynthesis; L-asparagine biosynthesis; L-asparagine from L-aspartate (ammonia route): step 1/1. The sequence is that of Aspartate--ammonia ligase from Streptococcus thermophilus (strain ATCC BAA-250 / LMG 18311).